The chain runs to 281 residues: Very long chain fatty acid elongase 7 (281 aa).

Alanine 2 bears the N-acetylalanine mark. At 2 to 27 (AFSDLTSRTVRFYDNWIKDADPRVED) the chain is on the lumenal side. A helical transmembrane segment spans residues 28-48 (YLLMSSPLPQTIILGLYVYFV). Residues 49–72 (TSLGPKLMENRKPFELKKAMITYN) are Cytoplasmic-facing. Residues 73–93 (FFIVLFSVYMCYEFVMSGWGT) form a helical membrane-spanning segment. The Lumenal portion of the chain corresponds to 94 to 115 (GYSFRCDIVDYSQSPRAMRMVH). The cysteines at positions 99 and 231 are disulfide-linked. The helical transmembrane segment at 116–136 (TCWLYYFSKFIELLDTIFFVL) threads the bilayer. Residues lysine 124, arginine 137, lysine 139, glutamine 142, and histidine 147 each coordinate 3-oxoeicosanoyl-CoA. The Cytoplasmic segment spans residues 137-142 (RKKNSQ). Residues 143 to 162 (VTFLHVFHHTIMPWTWWFGV) traverse the membrane as a helical segment. The HxxHH motif signature appears at 147–151 (HVFHH). Histidine 150 functions as the Nucleophile in the catalytic mechanism. Residues 163 to 171 (KFAAGGLGT) lie on the Lumenal side of the membrane. A helical membrane pass occupies residues 172 to 194 (FHAFLNTAVHVVMYSYYGLCAMG). Positions 187, 204, 208, and 211 each coordinate 3-oxoeicosanoyl-CoA. Over 195–206 (PAYQKYLWWKKH) the chain is Cytoplasmic. A helical transmembrane segment spans residues 207 to 227 (LTSLQLVQFVLVTIHIGQIFF). Over 228–236 (MEDCNYQYP) the chain is Lumenal. Residues 237 to 257 (VFLYIIMSYGCIFLLLFLHFW) form a helical membrane-spanning segment. At 258 to 281 (YRAYTKGQRLPKTLENGNCKSKRH) the chain is on the cytoplasmic side. Arginine 266 is a binding site for 3-oxoeicosanoyl-CoA. The Di-lysine motif signature appears at 277–281 (KSKRH).

It belongs to the ELO family. ELOVL7 subfamily. In terms of assembly, homodimer. Interacts with TECR.

The protein localises to the endoplasmic reticulum membrane. It carries out the reaction a very-long-chain acyl-CoA + malonyl-CoA + H(+) = a very-long-chain 3-oxoacyl-CoA + CO2 + CoA. The catalysed reaction is eicosanoyl-CoA + malonyl-CoA + H(+) = 3-oxodocosanoyl-CoA + CO2 + CoA. It catalyses the reaction (5Z,8Z,11Z,14Z)-eicosatetraenoyl-CoA + malonyl-CoA + H(+) = (7Z,10Z,13Z,16Z)-3-oxodocosatetraenoyl-CoA + CO2 + CoA. The enzyme catalyses (6Z,9Z,12Z)-octadecatrienoyl-CoA + malonyl-CoA + H(+) = (8Z,11Z,14Z)-3-oxoeicosatrienoyl-CoA + CO2 + CoA. It carries out the reaction (9Z,12Z)-octadecadienoyl-CoA + malonyl-CoA + H(+) = (11Z,14Z)-3-oxoicosa-11,14-dienoyl-CoA + CO2 + CoA. The catalysed reaction is (9Z)-octadecenoyl-CoA + malonyl-CoA + H(+) = 3-oxo-(11Z)-eicosenoyl-CoA + CO2 + CoA. It catalyses the reaction octadecanoyl-CoA + malonyl-CoA + H(+) = 3-oxoeicosanoyl-CoA + CO2 + CoA. The enzyme catalyses hexadecanoyl-CoA + malonyl-CoA + H(+) = 3-oxooctadecanoyl-CoA + CO2 + CoA. It carries out the reaction (9Z,12Z,15Z)-octadecatrienoyl-CoA + malonyl-CoA + H(+) = (11Z,14Z,17Z)-3-oxoeicosatrienoyl-CoA + CO2 + CoA. It functions in the pathway lipid metabolism; fatty acid biosynthesis. In terms of biological role, catalyzes the first and rate-limiting reaction of the four reactions that constitute the long-chain fatty acids elongation cycle. This endoplasmic reticulum-bound enzymatic process allows the addition of 2 carbons to the chain of long- and very long-chain fatty acids (VLCFAs) per cycle. Condensing enzyme with higher activity toward C18 acyl-CoAs, especially C18:3(n-3) acyl-CoAs and C18:3(n-6)-CoAs. Also active toward C20:4-, C18:0-, C18:1-, C18:2- and C16:0-CoAs, and weakly toward C20:0-CoA. Little or no activity toward C22:0-, C24:0-, or C26:0-CoAs. May participate in the production of saturated and polyunsaturated VLCFAs of different chain lengths that are involved in multiple biological processes as precursors of membrane lipids and lipid mediators. The sequence is that of Very long chain fatty acid elongase 7 from Mus musculus (Mouse).